We begin with the raw amino-acid sequence, 469 residues long: Probable cobyric acid synthase (469 aa).

In terms of domain architecture, GATase cobBQ-type spans 241-427 (SGSIGIVRYP…VHGILENNEF (187 aa)). Cysteine 319 serves as the catalytic Nucleophile. Histidine 419 is a catalytic residue.

The protein belongs to the CobB/CobQ family. CobQ subfamily.

Its pathway is cofactor biosynthesis; adenosylcobalamin biosynthesis. Catalyzes amidations at positions B, D, E, and G on adenosylcobyrinic A,C-diamide. NH(2) groups are provided by glutamine, and one molecule of ATP is hydrogenolyzed for each amidation. The polypeptide is Probable cobyric acid synthase (Picrophilus torridus (strain ATCC 700027 / DSM 9790 / JCM 10055 / NBRC 100828 / KAW 2/3)).